A 181-amino-acid polypeptide reads, in one-letter code: CASP-like protein UU-1 (181 aa).

Residues 1–30 (MTMELESQEVVVETTTAAAAARAASAAHVR) are Cytoplasmic-facing. A helical membrane pass occupies residues 31-51 (TTVALRLLAFAASLAAAVVVA). Residues 52–65 (TNRQERWGITVTFK) lie on the Extracellular side of the membrane. A helical membrane pass occupies residues 66-86 (MFAVWEAFVAINFACAAYALL). Over 87–107 (TAVFVKKLVSKHWLHHMDQFT) the chain is Cytoplasmic. The helical transmembrane segment at 108–128 (VNLQAASTAGAGAVGSVAMWG) threads the bilayer. Over 129–147 (NEPSGWYAVCRLYRLYCDR) the chain is Extracellular. Residues 148–168 (GAVSLALAFVAFVAFGVASSL) form a helical membrane-spanning segment. The Cytoplasmic segment spans residues 169-181 (SRYPRAPPPPAPR).

The protein belongs to the Casparian strip membrane proteins (CASP) family. As to quaternary structure, homodimer and heterodimers.

The protein localises to the cell membrane. The polypeptide is CASP-like protein UU-1 (Sorghum bicolor (Sorghum)).